A 496-amino-acid chain; its full sequence is 1-aminocyclopropane-1-carboxylate synthase 2 (496 aa).

Substrate is bound by residues Glu55 and Tyr93. Position 279 is an N6-(pyridoxal phosphate)lysine (Lys279). Phosphoserine occurs at positions 483, 488, and 491.

Belongs to the class-I pyridoxal-phosphate-dependent aminotransferase family. Homodimer and heterodimer. In vivo, the relevance of heterodimerization with other ACS enzymes is however unsure. Interacts with GRF3. The cofactor is pyridoxal 5'-phosphate. Phosphorylated on serine residue by MAP kinase (MPK6). In terms of processing, may be processed at its C-terminus. In terms of tissue distribution, high in developing leaves and in flowers. Expressed in roots and siliques.

It carries out the reaction S-adenosyl-L-methionine = 1-aminocyclopropane-1-carboxylate + S-methyl-5'-thioadenosine + H(+). It functions in the pathway alkene biosynthesis; ethylene biosynthesis via S-adenosyl-L-methionine; ethylene from S-adenosyl-L-methionine: step 1/2. In terms of biological role, 1-aminocyclopropane-1-carboxylate synthase (ACS) enzymes catalyze the conversion of S-adenosyl-L-methionine (SAM) into 1-aminocyclopropane-1-carboxylate (ACC), a direct precursor of ethylene. This is 1-aminocyclopropane-1-carboxylate synthase 2 (ACS2) from Arabidopsis thaliana (Mouse-ear cress).